Consider the following 375-residue polypeptide: o-succinylbenzoate synthase (375 aa).

K166 (proton donor) is an active-site residue. Mg(2+) is bound by residues D191, E216, and D241. Catalysis depends on K265, which acts as the Proton acceptor.

The protein belongs to the mandelate racemase/muconate lactonizing enzyme family. MenC type 2 subfamily. In terms of assembly, homotetramer. Requires a divalent metal cation as cofactor.

The catalysed reaction is (1R,6R)-6-hydroxy-2-succinyl-cyclohexa-2,4-diene-1-carboxylate = 2-succinylbenzoate + H2O. It carries out the reaction N-acetyl-D-methionine = N-acetyl-L-methionine. Its pathway is quinol/quinone metabolism; 1,4-dihydroxy-2-naphthoate biosynthesis; 1,4-dihydroxy-2-naphthoate from chorismate: step 4/7. The protein operates within quinol/quinone metabolism; menaquinone biosynthesis. In terms of biological role, converts 2-succinyl-6-hydroxy-2,4-cyclohexadiene-1-carboxylate (SHCHC) to 2-succinylbenzoate (OSB). Also acts as a N-succinylamino acid racemase (NSAR) that catalyzes the racemization of N-succinyl-D/L-phenylalanine. Can catalyze the racemization of a broad range of N-acylamino acids, including N-acetyl-D-methionine, N-formyl-D/L-methionine, N-formyl-D/L-norleucine, N-formyl-D/L-aminobutyric acid, N-formyl-D/L-norvaline, N-formyl-D/L-homophenylalanine, N-carbamoyl-D-methionine and N-carbamoyl-D-norleucine. May be a bifunctional enzyme involved in menaquinone biosynthesis and in an irreversible pathway for the conversion of D- to L-amino acids, thereby facilitating the survival and/or growth of the organism. This chain is o-succinylbenzoate synthase, found in Geobacillus stearothermophilus (Bacillus stearothermophilus).